Consider the following 178-residue polypeptide: NADPH azoreductase (178 aa).

106–111 (GGGKGG) is an NADP(+) binding site.

Belongs to the azoreductase type 2 family. In terms of assembly, monomer.

It carries out the reaction N,N-dimethyl-1,4-phenylenediamine + aniline + 2 NADP(+) = 4-(dimethylamino)azobenzene + 2 NADPH + 2 H(+). Functionally, catalyzes the reductive cleavage of azo bond in aromatic azo compounds to the corresponding amines. Requires NADPH as an electron donor for its activity. Compounds with paired naphthalene groups coupled with the azo group are good substrates, with the following preference order: Rocceline &gt; Sumifix Black B &gt; Solar Orange. This Bacillus sp. (strain OY1-2) protein is NADPH azoreductase (azr).